The sequence spans 505 residues: Maturase K (505 aa).

This sequence belongs to the intron maturase 2 family. MatK subfamily.

It is found in the plastid. Its subcellular location is the chloroplast. Usually encoded in the trnK tRNA gene intron. Probably assists in splicing its own and other chloroplast group II introns. This is Maturase K from Beta vulgaris (Sugar beet).